Consider the following 865-residue polypeptide: Xylosyltransferase 2 (865 aa).

Residues 1 to 15 (MVASARVQKLVRRYK) are Cytoplasmic-facing. Residues 16–36 (LAIATALAILLLQGLVVWSFS) traverse the membrane as a helical; Signal-anchor for type II membrane protein segment. Residues 37–865 (GLEEDEAGEK…GPVKADGRLR (829 aa)) lie on the Lumenal side of the membrane. A disordered region spans residues 41 to 157 (DEAGEKGRQR…EGAPQPTDNG (117 aa)). The segment covering 53-65 (RPLDPGEGSKDTD) has biased composition (basic and acidic residues). Positions 73–82 (STGRRHGRWR) are enriched in basic residues. Asparagine 122 carries an N-linked (GlcNAc...) asparagine glycan. Positions 125 to 137 (GAAAGEALVGAAG) are enriched in low complexity. 4 disulfide bridges follow: cysteine 162/cysteine 190, cysteine 206/cysteine 448, cysteine 467/cysteine 480, and cysteine 469/cysteine 478. UDP-alpha-D-xylose contacts are provided by residues valine 239, aspartate 267, and 296-298 (TIW). N-linked (GlcNAc...) asparagine glycosylation occurs at asparagine 327. 400–401 (DW) serves as a coordination point for UDP-alpha-D-xylose. UDP-alpha-D-xylose-binding positions include serine 481 and 504–505 (RK). 2 disulfides stabilise this stretch: cysteine 581-cysteine 833 and cysteine 826-cysteine 839. A glycan (N-linked (GlcNAc...) asparagine) is linked at asparagine 683. The segment at 846 to 865 (SLSPDPKSELGPVKADGRLR) is disordered.

The protein belongs to the glycosyltransferase 14 family. XylT subfamily. In terms of assembly, monomer. Mg(2+) serves as cofactor. Mn(2+) is required as a cofactor. Post-translationally, contains disulfide bonds.

The protein resides in the golgi apparatus membrane. Its subcellular location is the secreted. The catalysed reaction is UDP-alpha-D-xylose + L-seryl-[protein] = 3-O-(beta-D-xylosyl)-L-seryl-[protein] + UDP + H(+). Its pathway is glycan metabolism; chondroitin sulfate biosynthesis. The protein operates within glycan metabolism; heparan sulfate biosynthesis. Its function is as follows. Catalyzes the first step in the biosynthesis of chondroitin sulfate, heparan sulfate and dermatan sulfate proteoglycans, such as DCN. Transfers D-xylose from UDP-D-xylose to specific serine residues of the core protein. This Pan troglodytes (Chimpanzee) protein is Xylosyltransferase 2 (XYLT2).